The sequence spans 71 residues: uncharacterized protein (71 aa).

An N-terminal signal peptide occupies residues 1–23; that stretch reads MTLLIILILKYLLCLENLKNISL. 4 N-linked (GlcNAc...) asparagine glycosylation sites follow: N20, N28, N44, and N50.

It is found in the secreted. This is an uncharacterized protein from Dictyostelium discoideum (Social amoeba).